The primary structure comprises 135 residues: Methylglyoxal synthase (135 aa).

Residues methionine 1–phenylalanine 135 enclose the MGS-like domain. Substrate contacts are provided by residues histidine 10, lysine 14, threonine 36–threonine 39, and serine 56–glycine 57. Aspartate 62 serves as the catalytic Proton donor/acceptor. Residue histidine 89 coordinates substrate.

Belongs to the methylglyoxal synthase family.

The catalysed reaction is dihydroxyacetone phosphate = methylglyoxal + phosphate. In terms of biological role, catalyzes the formation of methylglyoxal from dihydroxyacetone phosphate. This chain is Methylglyoxal synthase, found in Pseudoalteromonas atlantica (strain T6c / ATCC BAA-1087).